The following is a 1845-amino-acid chain: Collagen alpha-1(XXVII) chain (1845 aa).

Positions 1–39 are cleaved as a signal peptide; the sequence is MGTGFARGARGTAASGPGGGFLFAWILVSFTCHLASTQG. The propeptide at 40-609 is N-terminal propeptide; the sequence is APEDVDVLQR…LGPTPFPMLM (570 aa). A Laminin G-like domain is found at 72–237; the sequence is PSGFIFTQRA…NYCAHLRERC (166 aa). A glycan (N-linked (GlcNAc...) asparagine) is linked at asparagine 272. Disordered regions lie at residues 299-478, 502-572, 608-774, and 827-1608; these read TKPL…VPKT, PPLG…RPST, LMGP…MGRP, and LMGG…HPIQ. Polar residues predominate over residues 312–323; that stretch reads HSSSQTPLSPAK. 2 stretches are compositionally biased toward low complexity: residues 327–343 and 356–372; these read RKTPSPSSSASLANSTR and TTTSPTKRSPTKPSVSP. An N-linked (GlcNAc...) asparagine glycan is attached at asparagine 340. The segment covering 429-439 has biased composition (pro residues); the sequence is PRPPVPSPQPL. The segment covering 444–454 has biased composition (polar residues); the sequence is GLSKKFTNPTV. Residues 554 to 564 show a composition bias toward basic and acidic residues; that stretch reads SARDASPRDLT. 11 Collagen-like domains span residues 610 to 664, 673 to 732, 742 to 801, 817 to 876, 877 to 936, 937 to 996, 997 to 1038, 1039 to 1096, 1117 to 1176, 1177 to 1236, and 1240 to 1299; these read GPPG…GDPG, GAKG…PGPV, GYIG…PGPP, GYPG…PGPL, GKAG…EGPM, GPPG…VGEK, GDRG…PGSR, GLPG…GAKG, GSQG…PGLE, GDHG…QGEK, and GAKG…NGHK. The segment at 610 to 1603 is triple-helical; it reads GPPGSKGDCG…RGRPGPPGPP (994 aa). Over residues 639–654 the composition is skewed to pro residues; it reads RGPPGPYGNPGPPGPP. 2 stretches are compositionally biased toward low complexity: residues 677–690 and 699–719; these read NMGLPGLSGNPGPL and PGAAGHPGEQGQPGPEGSPGA. Residues 865–874 are compositionally biased toward gly residues; the sequence is GLPGGRGKPG. Over residues 896–909 the composition is skewed to low complexity; that stretch reads FPGDIGPPGDNGPE. A compositionally biased stretch (gly residues) spans 1018–1027; that stretch reads GTPGGIGNPG. 3 stretches are compositionally biased toward low complexity: residues 1074–1086, 1112–1122, and 1152–1167; these read RGRPGQPGQQGAA, LPGEPGSQGPQ, and KGDLGPLGPPGEQGLI. Basic and acidic residues-rich tracts occupy residues 1187-1212 and 1226-1238; these read LKGDRGDPGPDGEHGEKGQEGLKGED and REGKPGKQGEKGQ. Basic and acidic residues-rich tracts occupy residues 1311 to 1323 and 1335 to 1345; these read KGEKGDQGEDGKT and PVGDRGDRGEP. The 60-residue stretch at 1325–1384 folds into the Collagen-like 12 domain; sequence GPPGPPGDRGPVGDRGDRGEPGDPGYPGQEGVQGLRGEPGQQGQPGHPGPRGRPGPKGSK. Low complexity-rich tracts occupy residues 1360-1369, 1395-1422, and 1438-1465; these read RGEPGQQGQP, KAGPSGRRGTQGLQGLPGPRGVVGRQGP, and PGYQGDQGNDGDPGPVGPAGRRGNPGVA. Collagen-like domains lie at 1424 to 1483, 1484 to 1543, and 1544 to 1603; these read GTAG…SGLP, GQLG…KGIQ, and GPRG…PGPP. The segment covering 1557-1572 has biased composition (low complexity); the sequence is IIGPPGMLGPSGLPGP. The segment covering 1588-1605 has biased composition (pro residues); that stretch reads RGPPGPRGRPGPPGPPWH. A propeptide spans 1607–1845 (C-terminal propeptide); it reads IQFQQDDLGA…RLEVGPACFL (239 aa). A Fibrillar collagen NC1 domain is found at 1645–1845; the sequence is GEIFKTLHYL…RLEVGPACFL (201 aa). 3 disulfide bridges follow: cysteine 1675-cysteine 1707, cysteine 1716-cysteine 1843, and cysteine 1752-cysteine 1796. Positions 1693, 1695, 1698, and 1701 each coordinate Ca(2+). An N-linked (GlcNAc...) asparagine glycan is attached at asparagine 1754.

The protein belongs to the fibrillar collagen family. In terms of tissue distribution, highly expressed in cartilage, eye and ear.

The protein resides in the secreted. The protein localises to the extracellular space. Its subcellular location is the extracellular matrix. Plays a role during the calcification of cartilage and the transition of cartilage to bone. The chain is Collagen alpha-1(XXVII) chain (Col27a1) from Mus musculus (Mouse).